Reading from the N-terminus, the 337-residue chain is Monoacylglycerol lipase ABHD6 (337 aa).

Residues 1–8 lie on the Extracellular side of the membrane; it reads MDLDVVNM. A helical; Signal-anchor for type II membrane protein membrane pass occupies residues 9–29; it reads FVIAGGTLAIPILAFVASFLL. The Cytoplasmic portion of the chain corresponds to 30 to 337; sequence WPSALIRIYY…HNTDNNKKLD (308 aa). Residues 72-313 form the AB hydrolase-1 domain; it reads PSILMLHGFS…CGHSVVMERP (242 aa). F80 provides a ligand contact to (9Z)-octadecenoate. S148 serves as the catalytic Nucleophile. (9Z)-octadecenoate is bound at residue M149. Residues D278 and H306 each act as charge relay system in the active site. Residue H306 coordinates (9Z)-octadecenoate.

This sequence belongs to the AB hydrolase superfamily.

It localises to the late endosome membrane. The protein resides in the lysosome membrane. Its subcellular location is the mitochondrion membrane. The enzyme catalyses Hydrolyzes glycerol monoesters of long-chain fatty acids.. It carries out the reaction 1-octanoylglycerol + H2O = octanoate + glycerol + H(+). It catalyses the reaction 1-decanoylglycerol + H2O = decanoate + glycerol + H(+). The catalysed reaction is 1-dodecanoylglycerol + H2O = dodecanoate + glycerol + H(+). The enzyme catalyses 1-tetradecanoylglycerol + H2O = tetradecanoate + glycerol + H(+). It carries out the reaction 2-hexadecanoylglycerol + H2O = glycerol + hexadecanoate + H(+). It catalyses the reaction 2-(9Z-octadecenoyl)-glycerol + H2O = glycerol + (9Z)-octadecenoate + H(+). The catalysed reaction is 1-(9Z-octadecenoyl)-glycerol + H2O = glycerol + (9Z)-octadecenoate + H(+). The enzyme catalyses 2-(9Z,12Z-octadecadienoyl)-glycerol + H2O = (9Z,12Z)-octadecadienoate + glycerol + H(+). It carries out the reaction 2-(5Z,8Z,11Z,14Z-eicosatetraenoyl)-glycerol + H2O = glycerol + (5Z,8Z,11Z,14Z)-eicosatetraenoate + H(+). It catalyses the reaction 1-(5Z,8Z,11Z,14Z-eicosatetraenoyl)-glycerol + H2O = glycerol + (5Z,8Z,11Z,14Z)-eicosatetraenoate + H(+). The catalysed reaction is 1-(9Z,12Z-octadecadienoyl)-glycerol + H2O = (9Z,12Z)-octadecadienoate + glycerol + H(+). The enzyme catalyses 3-(9Z-octadecenoyl)-sn-glycero-1-phospho-(3'-(9Z-octadecenoyl)-1'-sn-glycerol) + H2O = 3-(9Z-octadecenoyl)-sn-glycero-1-phospho-(1'-sn-glycerol) + (9Z)-octadecenoate + H(+). It carries out the reaction (S,S)-2-(9Z-octadecenoyl)-sn-glycero-1-phospho-(2'-(9Z-octadecenoyl)-1'-sn-glycerol) + H2O = (S,S)-2-(9Z-octadecenoyl)-sn-glycero-1-phospho-(1'-sn-glycerol) + (9Z)-octadecenoate + H(+). It catalyses the reaction (R,R)-2-(9Z-octadecenoyl)-sn-glycero-3-phospho-(2'-(9Z-octadecenoyl)-3'-sn-glycerol) + H2O = (R,R)-2-(9Z-octadecenoyl)-sn-glycero-3-phospho-(3'-sn-glycerol) + (9Z)-octadecenoate + H(+). Functionally, lipase that preferentially hydrolysis medium-chain saturated monoacylglycerols including 2-arachidonoylglycerol. Through 2-arachidonoylglycerol degradation may regulate endocannabinoid signaling pathways. Also has a lysophosphatidyl lipase activity with a preference for lysophosphatidylglycerol among other lysophospholipids. Also able to degrade bis(monoacylglycero)phosphate (BMP) and constitutes the major enzyme for BMP catabolism. BMP, also known as lysobisphosphatidic acid, is enriched in late endosomes and lysosomes and plays a key role in the formation of intraluminal vesicles and in lipid sorting. This Homo sapiens (Human) protein is Monoacylglycerol lipase ABHD6.